We begin with the raw amino-acid sequence, 29 residues long: MNIVDIAWAALMVVFTFSLSLVVWGRSGL.

The helical transmembrane segment at 3-23 (IVDIAWAALMVVFTFSLSLVV) threads the bilayer.

It belongs to the PetN family. The 4 large subunits of the cytochrome b6-f complex are cytochrome b6, subunit IV (17 kDa polypeptide, PetD), cytochrome f and the Rieske protein, while the 4 small subunits are PetG, PetL, PetM and PetN. The complex functions as a dimer.

The protein resides in the plastid. The protein localises to the chloroplast thylakoid membrane. Its function is as follows. Component of the cytochrome b6-f complex, which mediates electron transfer between photosystem II (PSII) and photosystem I (PSI), cyclic electron flow around PSI, and state transitions. This Gnetum parvifolium (Small-leaved jointfir) protein is Cytochrome b6-f complex subunit 8.